The following is a 150-amino-acid chain: Cytochrome c oxidase subunit 5A, mitochondrial (150 aa).

A mitochondrion-targeting transit peptide spans 1–41; that stretch reads MLGAALRRCAVAATTRADPRGLLHSARTPGPAVAIQSVRCY. An SIFI-degron motif is present at residues 2-17; it reads LGAALRRCAVAATTRA. Residues lysine 87 and lysine 113 each carry the N6-acetyllysine modification. Phosphothreonine is present on threonine 141.

This sequence belongs to the cytochrome c oxidase subunit 5A family. Component of the cytochrome c oxidase (complex IV, CIV), a multisubunit enzyme composed of 14 subunits. The complex is composed of a catalytic core of 3 subunits MT-CO1, MT-CO2 and MT-CO3, encoded in the mitochondrial DNA, and 11 supernumerary subunits COX4I1 (or COX4I2), COX5A, COX5B, COX6A1 (or COX6A2), COX6B1 (or COX6B2), COX6C, COX7A2 (or COX7A1), COX7B, COX7C, COX8A and NDUFA4, which are encoded in the nuclear genome. The complex exists as a monomer or a dimer and forms supercomplexes (SCs) in the inner mitochondrial membrane with NADH-ubiquinone oxidoreductase (complex I, CI) and ubiquinol-cytochrome c oxidoreductase (cytochrome b-c1 complex, complex III, CIII), resulting in different assemblies (supercomplex SCI(1)III(2)IV(1) and megacomplex MCI(2)III(2)IV(2)). Interacts with AFG1L. Interacts with RAB5IF. In response to mitochondrial stress, the precursor protein is ubiquitinated by the SIFI complex in the cytoplasm before mitochondrial import, leading to its degradation. Within the SIFI complex, UBR4 initiates ubiquitin chain that are further elongated or branched by KCMF1.

The protein localises to the mitochondrion inner membrane. It functions in the pathway energy metabolism; oxidative phosphorylation. Component of the cytochrome c oxidase, the last enzyme in the mitochondrial electron transport chain which drives oxidative phosphorylation. The respiratory chain contains 3 multisubunit complexes succinate dehydrogenase (complex II, CII), ubiquinol-cytochrome c oxidoreductase (cytochrome b-c1 complex, complex III, CIII) and cytochrome c oxidase (complex IV, CIV), that cooperate to transfer electrons derived from NADH and succinate to molecular oxygen, creating an electrochemical gradient over the inner membrane that drives transmembrane transport and the ATP synthase. Cytochrome c oxidase is the component of the respiratory chain that catalyzes the reduction of oxygen to water. Electrons originating from reduced cytochrome c in the intermembrane space (IMS) are transferred via the dinuclear copper A center (CU(A)) of subunit 2 and heme A of subunit 1 to the active site in subunit 1, a binuclear center (BNC) formed by heme A3 and copper B (CU(B)). The BNC reduces molecular oxygen to 2 water molecules using 4 electrons from cytochrome c in the IMS and 4 protons from the mitochondrial matrix. The protein is Cytochrome c oxidase subunit 5A, mitochondrial (COX5A) of Homo sapiens (Human).